The chain runs to 231 residues: Sugar fermentation stimulation protein homolog (231 aa).

The protein belongs to the SfsA family.

The chain is Sugar fermentation stimulation protein homolog from Pyrobaculum islandicum (strain DSM 4184 / JCM 9189 / GEO3).